Here is a 148-residue protein sequence, read N- to C-terminus: UPF0178 protein Mlg_1612 (148 aa).

The protein belongs to the UPF0178 family.

This Alkalilimnicola ehrlichii (strain ATCC BAA-1101 / DSM 17681 / MLHE-1) protein is UPF0178 protein Mlg_1612.